A 195-amino-acid polypeptide reads, in one-letter code: Shikimate kinase (195 aa).

ATP is bound at residue 21–26 (GTGKTS). Thr-25 contributes to the Mg(2+) binding site. Residues Asp-43, Arg-67, and Gly-89 each contribute to the substrate site. The interval 128–148 (REQRPSFSGKASTEISEETMR) is disordered. Arg-131 lines the ATP pocket. Residues 132–141 (PSFSGKASTE) show a composition bias toward polar residues. Residue Arg-158 coordinates substrate.

This sequence belongs to the shikimate kinase family. As to quaternary structure, monomer. The cofactor is Mg(2+).

Its subcellular location is the cytoplasm. It catalyses the reaction shikimate + ATP = 3-phosphoshikimate + ADP + H(+). Its pathway is metabolic intermediate biosynthesis; chorismate biosynthesis; chorismate from D-erythrose 4-phosphate and phosphoenolpyruvate: step 5/7. Its function is as follows. Catalyzes the specific phosphorylation of the 3-hydroxyl group of shikimic acid using ATP as a cosubstrate. This is Shikimate kinase from Syntrophus aciditrophicus (strain SB).